We begin with the raw amino-acid sequence, 117 residues long: Photosystem II reaction center Psb28 protein (117 aa).

This sequence belongs to the Psb28 family. In terms of assembly, part of the photosystem II complex.

It is found in the cellular thylakoid membrane. The chain is Photosystem II reaction center Psb28 protein from Prochlorococcus marinus (strain MIT 9301).